Reading from the N-terminus, the 443-residue chain is Xaa-Pro dipeptidase (443 aa).

The Mn(2+) site is built by Asp-246, Asp-257, His-339, Glu-384, and Glu-423.

This sequence belongs to the peptidase M24B family. Bacterial-type prolidase subfamily. Mn(2+) is required as a cofactor.

It catalyses the reaction Xaa-L-Pro dipeptide + H2O = an L-alpha-amino acid + L-proline. In terms of biological role, splits dipeptides with a prolyl residue in the C-terminal position. This chain is Xaa-Pro dipeptidase, found in Shigella boydii serotype 18 (strain CDC 3083-94 / BS512).